Consider the following 96-residue polypeptide: uncharacterized protein (96 aa).

The next 2 membrane-spanning stretches (helical) occupy residues 27–47 (LYTVNDFIIGAMFLVGSFFFF) and 52–72 (MSAGIWLFAIGSLLLLIRPTI).

The protein localises to the cell membrane. This is an uncharacterized protein from Bacillus subtilis (strain 168).